A 479-amino-acid chain; its full sequence is Ribosomal RNA small subunit methyltransferase F (479 aa).

S-adenosyl-L-methionine contacts are provided by residues A125–K131, E149, D176, and D194. C247 acts as the Nucleophile in catalysis.

Belongs to the class I-like SAM-binding methyltransferase superfamily. RsmB/NOP family.

The protein localises to the cytoplasm. The catalysed reaction is cytidine(1407) in 16S rRNA + S-adenosyl-L-methionine = 5-methylcytidine(1407) in 16S rRNA + S-adenosyl-L-homocysteine + H(+). Specifically methylates the cytosine at position 1407 (m5C1407) of 16S rRNA. The chain is Ribosomal RNA small subunit methyltransferase F from Shigella boydii serotype 4 (strain Sb227).